The primary structure comprises 798 residues: Transferrin receptor protein 2 (798 aa).

Residues 1 to 81 (MEQRWGLLRR…WAAAGRKAAP (81 aa)) lie on the Cytoplasmic side of the membrane. Residues 23–26 (YRRV) carry the Endocytosis signal motif. Residues 82–102 (YLVLITLLIFTGAFLLGYVAF) form a helical; Signal-anchor for type II membrane protein membrane-spanning segment. Topologically, residues 103–798 (RGSCQACGDS…GDVWNIDNNF (696 aa)) are extracellular. N235, N334, and N535 each carry an N-linked (GlcNAc...) asparagine glycan.

It belongs to the peptidase M28 family. M28B subfamily. As to expression, predominantly expressed in liver. Also expressed in kidney, spleen, brain, lung, heart and muscle with very low expression in kidney, muscle and heart.

The protein resides in the cell membrane. It localises to the cytoplasm. Functionally, mediates cellular uptake of transferrin-bound iron in a non-iron dependent manner. May be involved in iron metabolism, hepatocyte function and erythrocyte differentiation. The polypeptide is Transferrin receptor protein 2 (Tfr2) (Mus musculus (Mouse)).